A 161-amino-acid chain; its full sequence is MKLSEIADNVGSRKKRMRIGRGIGSGKGKTGGRGGKGQTARSGVRIKGFEGGQMPLHRRLPKRGFNNIFALEFAEVNLDRLQEAVDSKAIDAGKVVDAAALVEAGVLRRAKDGVRLLGRGELTAKLNIEVHGATKSAIAAVEKAGGSVKILAPKAEEGEAA.

A disordered region spans residues 1–43 (MKLSEIADNVGSRKKRMRIGRGIGSGKGKTGGRGGKGQTARSG). The span at 21-37 (RGIGSGKGKTGGRGGKG) shows a compositional bias: gly residues.

Part of the 50S ribosomal subunit.

Binds to the 23S rRNA. This chain is Large ribosomal subunit protein uL15, found in Rhodopseudomonas palustris (strain ATCC BAA-98 / CGA009).